The sequence spans 245 residues: NAD(P)H-quinone oxidoreductase subunit K (245 aa).

Positions 58, 59, 123, and 154 each coordinate [4Fe-4S] cluster.

It belongs to the complex I 20 kDa subunit family. In terms of assembly, NDH-1 can be composed of about 15 different subunits; different subcomplexes with different compositions have been identified which probably have different functions. [4Fe-4S] cluster serves as cofactor.

It localises to the cellular thylakoid membrane. It carries out the reaction a plastoquinone + NADH + (n+1) H(+)(in) = a plastoquinol + NAD(+) + n H(+)(out). It catalyses the reaction a plastoquinone + NADPH + (n+1) H(+)(in) = a plastoquinol + NADP(+) + n H(+)(out). NDH-1 shuttles electrons from an unknown electron donor, via FMN and iron-sulfur (Fe-S) centers, to quinones in the respiratory and/or the photosynthetic chain. The immediate electron acceptor for the enzyme in this species is believed to be plastoquinone. Couples the redox reaction to proton translocation, and thus conserves the redox energy in a proton gradient. Cyanobacterial NDH-1 also plays a role in inorganic carbon-concentration. The protein is NAD(P)H-quinone oxidoreductase subunit K of Nostoc sp. (strain PCC 7120 / SAG 25.82 / UTEX 2576).